The primary structure comprises 861 residues: DNA mismatch repair protein MutS (861 aa).

Residue 618–625 (GPNMGGKS) participates in ATP binding.

Belongs to the DNA mismatch repair MutS family.

Its function is as follows. This protein is involved in the repair of mismatches in DNA. It is possible that it carries out the mismatch recognition step. This protein has a weak ATPase activity. This chain is DNA mismatch repair protein MutS, found in Shewanella sp. (strain MR-7).